The primary structure comprises 253 residues: Kojic acid related protein 1 (253 aa).

The next 3 helical transmembrane spans lie at 23–43 (PIKFLWSGALFLGVLSIFILI), 53–73 (IFYPPVSVFVHVGLFIVYIVS), and 117–137 (ALFGFTIIIIVLYFVEIIVSV). The disordered stretch occupies residues 174–253 (FPMMSPALPS…PPPPKKAAKV (80 aa)). Composition is skewed to polar residues over residues 184–200 (GGTTQMMPTMSSRSPEF) and 226–240 (QQESSETLAPGNQPQ). Pro residues predominate over residues 242–253 (YFPPPPKKAAKV).

It is found in the membrane. In terms of biological role, involved in mycelium growth and repression of conidia formation by affecting the expression of brlA and abaA. Acts as a negative regulation factor for kojic acid production through affecting the expression of kojA, kojR and kojT. The polypeptide is Kojic acid related protein 1 (Aspergillus oryzae (strain ATCC 42149 / RIB 40) (Yellow koji mold)).